The chain runs to 239 residues: Large ribosomal subunit protein bL25 (239 aa).

Positions 211-239 (KGKKDKEDEEAEKGTSVASPTTATGGTKK) are disordered. Residues 226–239 (SVASPTTATGGTKK) show a composition bias toward polar residues.

This sequence belongs to the bacterial ribosomal protein bL25 family. CTC subfamily. In terms of assembly, part of the 50S ribosomal subunit; part of the 5S rRNA/L5/L18/L25 subcomplex. Contacts the 5S rRNA. Binds to the 5S rRNA independently of L5 and L18.

Functionally, this is one of the proteins that binds to the 5S RNA in the ribosome where it forms part of the central protuberance. This Endomicrobium trichonymphae protein is Large ribosomal subunit protein bL25.